The primary structure comprises 361 residues: P2Y purinoceptor 4 (361 aa).

Residues 1–20 (MTSAESLLFTSLGPSPSSGD) form a disordered region. Residues 1 to 30 (MTSAESLLFTSLGPSPSSGDGDCRFNEEFK) lie on the Extracellular side of the membrane. The helical transmembrane segment at 31-58 (FILLPMSYAVVFVLGLALNAPTLWLFLF) threads the bilayer. At 59-68 (RLRPWDATAT) the chain is on the cytoplasmic side. The chain crosses the membrane as a helical span at residues 69–91 (YMFHLALSDTLYVLSLPTLVYYY). Topologically, residues 92–108 (AARNHWPFGTGLCKFVR) are extracellular. Residues cysteine 104 and cysteine 181 are joined by a disulfide bond. The helical transmembrane segment at 109–127 (FLFYWNLYCSVLFLTCISV) threads the bilayer. Residues 128–149 (HRYLGICHPLRAIRWGRPRFAS) are Cytoplasmic-facing. Residues 150 to 170 (LLCLGVWLVVAGCLVPNLFFV) form a helical membrane-spanning segment. The Extracellular segment spans residues 171–192 (TTNANGTTILCHDTTLPEEFDH). An N-linked (GlcNAc...) asparagine glycan is attached at asparagine 175. The helical transmembrane segment at 193–218 (YVYFSSAVMVLLFGLPFLITLVCYGL) threads the bilayer. The Cytoplasmic segment spans residues 219-242 (MARRLYRPLPGAGQSSSRLRSLRT). A helical membrane pass occupies residues 243 to 265 (IAVVLTVFAVCFVPFHITRTIYY). At 266-283 (QARLLQADCHVLNIVNVV) the chain is on the extracellular side. Residues 284–305 (YKVTRPLASANSCLDPVLYLFT) form a helical membrane-spanning segment. Residues 306–361 (GDKYRNQLQQLCRGSKPKPRTAASSLALVTLHEESISRWADTHQDSTFSAYEGDRL) lie on the Cytoplasmic side of the membrane.

It belongs to the G-protein coupled receptor 1 family. Phosphorylation of Ser-329 and Ser-330 is a key step in agonist-dependent desensitization and loss of surface P2RY4. This phosphorylation does not involve PKC, nor other calcium-activated kinases. As to expression, widely expressed at low levels. In brain, higher expression in the pineal gland and ventricular system.

Its subcellular location is the cell membrane. Functionally, receptor for ATP and UTP coupled to G-proteins that activate a phosphatidylinositol-calcium second messenger system. Not activated by ADP or UDP. This chain is P2Y purinoceptor 4 (P2ry4), found in Rattus norvegicus (Rat).